Reading from the N-terminus, the 312-residue chain is Malate dehydrogenase (312 aa).

Residues 7–13 and D34 each bind NAD(+); that span reads GAAGGIG. R81 and R87 together coordinate substrate. Residues N94 and 117 to 119 each bind NAD(+); that span reads ITN. Residues N119 and R153 each coordinate substrate. H177 functions as the Proton acceptor in the catalytic mechanism. M228 contacts NAD(+).

The protein belongs to the LDH/MDH superfamily. MDH type 1 family. As to quaternary structure, homodimer.

The enzyme catalyses (S)-malate + NAD(+) = oxaloacetate + NADH + H(+). In terms of biological role, catalyzes the reversible oxidation of malate to oxaloacetate. The protein is Malate dehydrogenase of Mannheimia succiniciproducens (strain KCTC 0769BP / MBEL55E).